Reading from the N-terminus, the 28-residue chain is Potassium channel toxin alpha-KTx 13.2 (28 aa).

Disulfide bonds link Cys-2-Cys-19, Cys-6-Cys-24, and Cys-10-Cys-26. Residues 17 to 24 form an interaction with Ca(2+)-activated K(+) channels region; that stretch reads IKCINGSC.

The protein belongs to the short scorpion toxin superfamily. Potassium channel inhibitor family. Alpha-KTx 13 subfamily. As to expression, expressed by the venom gland.

It localises to the secreted. Functionally, potent and selective inhibitor of Kv1.2/KCNA2 potassium channels. This Orthochirus scrobiculosus (Central Asian scorpion) protein is Potassium channel toxin alpha-KTx 13.2.